Here is a 215-residue protein sequence, read N- to C-terminus: V-type ATP synthase subunit D (215 aa).

This sequence belongs to the V-ATPase D subunit family.

Produces ATP from ADP in the presence of a proton gradient across the membrane. The chain is V-type ATP synthase subunit D from Anaeromyxobacter sp. (strain Fw109-5).